The sequence spans 284 residues: Pantothenate synthetase (284 aa).

An ATP-binding site is contributed by 30-37 (MGNLHDGH). The active-site Proton donor is the H37. A (R)-pantoate-binding site is contributed by Q61. Q61 provides a ligand contact to beta-alanine. 149–152 (GEKD) serves as a coordination point for ATP. Q155 is a binding site for (R)-pantoate. ATP contacts are provided by residues V178 and 186-189 (LSSR).

It belongs to the pantothenate synthetase family. As to quaternary structure, homodimer.

The protein localises to the cytoplasm. The catalysed reaction is (R)-pantoate + beta-alanine + ATP = (R)-pantothenate + AMP + diphosphate + H(+). It participates in cofactor biosynthesis; (R)-pantothenate biosynthesis; (R)-pantothenate from (R)-pantoate and beta-alanine: step 1/1. Its function is as follows. Catalyzes the condensation of pantoate with beta-alanine in an ATP-dependent reaction via a pantoyl-adenylate intermediate. This Photorhabdus laumondii subsp. laumondii (strain DSM 15139 / CIP 105565 / TT01) (Photorhabdus luminescens subsp. laumondii) protein is Pantothenate synthetase.